The sequence spans 212 residues: Ropporin-1B (212 aa).

In terms of domain architecture, RIIa spans 12–49 (PELPKMLKEFAKAAIRAQPQDLIQWGADYFEALSRGET). The residue at position 56 (Ser-56) is a Phosphoserine. An interaction with RHPN1 region spans residues 209–212 (VWLE).

It belongs to the ropporin family. Homodimer. Interacts with RHPN1. May interact with SPA17. Interacts with AKAP3. Interacts with FSCB; the interaction increases upon spermatozoa capacitation conditions. Sumoylated, sumoylation decreases upon spermatozoa capacitation conditions.

It localises to the cell projection. Its subcellular location is the cilium. The protein resides in the flagellum. Important for male fertility. With ROPN1L, involved in fibrous sheath integrity and sperm motility, plays a role in PKA-dependent signaling processes required for spermatozoa capacitation. The polypeptide is Ropporin-1B (ROPN1B) (Homo sapiens (Human)).